A 163-amino-acid chain; its full sequence is Endoribonuclease YbeY (163 aa).

3 residues coordinate Zn(2+): His121, His125, and His131.

It belongs to the endoribonuclease YbeY family. Zn(2+) serves as cofactor.

The protein resides in the cytoplasm. Its function is as follows. Single strand-specific metallo-endoribonuclease involved in late-stage 70S ribosome quality control and in maturation of the 3' terminus of the 16S rRNA. The sequence is that of Endoribonuclease YbeY from Synechococcus sp. (strain JA-2-3B'a(2-13)) (Cyanobacteria bacterium Yellowstone B-Prime).